A 259-amino-acid polypeptide reads, in one-letter code: 5'-nucleotidase SurE (259 aa).

D11, D12, S42, and N99 together coordinate a divalent metal cation.

The protein belongs to the SurE nucleotidase family. The cofactor is a divalent metal cation.

It localises to the cytoplasm. The catalysed reaction is a ribonucleoside 5'-phosphate + H2O = a ribonucleoside + phosphate. Functionally, nucleotidase that shows phosphatase activity on nucleoside 5'-monophosphates. This Cytophaga hutchinsonii (strain ATCC 33406 / DSM 1761 / CIP 103989 / NBRC 15051 / NCIMB 9469 / D465) protein is 5'-nucleotidase SurE.